The chain runs to 755 residues: Dynamin-1-like protein (755 aa).

Met-1 bears the N-acetylmethionine mark. Positions 22–315 (IIQLPQIVVV…LMHHIRDCLP (294 aa)) constitute a Dynamin-type G domain. Residues 32-39 (GTQSSGKS) are G1 motif. Position 32–40 (32–40 (GTQSSGKSS)) interacts with GTP. The segment at 58–60 (VTR) is G2 motif. Residues 159–162 (DLPG) form a G3 motif region. Positions 228-231 (TKLD) are G4 motif. Residues 228–234 (TKLDLMD) and 259–262 (NRSQ) contribute to the GTP site. The G5 motif stretch occupies residues 258 to 261 (VNRS). The interval 357–502 (YCNTIEGTAK…NEMVHNLVAI (146 aa)) is middle domain. An interaction with GSK3B region spans residues 461–704 (NYSTQELLRF…NHVKDTLQSE (244 aa)). The interval 515-582 (ADACGLMNNN…IQDNRRETKN (68 aa)) is b domain. The interval 536 to 610 (ELPSAVSRDK…QEPTTGNWRG (75 aa)) is disordered. Ser-542 carries the phosphoserine modification. Residues Lys-545 and Lys-548 each participate in a glycyl lysine isopeptide (Lys-Gly) (interchain with G-Cter in SUMO) cross-link. The span at 550 to 567 (PSALAPASQEPSPAASAE) shows a compositional bias: low complexity. At Ser-561 the chain carries Phosphoserine. Residues 568-581 (ADGKLIQDNRRETK) are compositionally biased toward basic and acidic residues. Glycyl lysine isopeptide (Lys-Gly) (interchain with G-Cter in SUMO) cross-links involve residues Lys-571 and Lys-581. The span at 586-600 (AGGGIGDGGRIGDGG) shows a compositional bias: gly residues. 2 O-linked (GlcNAc) threonine glycosylation sites follow: Thr-604 and Thr-605. Lys-613 is covalently cross-linked (Glycyl lysine isopeptide (Lys-Gly) (interchain with G-Cter in SUMO)). Position 616 is an N6-acetyllysine; alternate (Lys-616). Residue Lys-616 forms a Glycyl lysine isopeptide (Lys-Gly) (interchain with G-Cter in SUMO); alternate linkage. Lys-625 participates in a covalent cross-link: Glycyl lysine isopeptide (Lys-Gly) (interchain with G-Cter in SUMO). At Ser-626 the chain carries Phosphoserine. A Glycyl lysine isopeptide (Lys-Gly) (interchain with G-Cter in SUMO) cross-link involves residue Lys-627. Residue Ser-635 is modified to Phosphoserine; by CDK1. Ser-656 bears the Phosphoserine; by CAMK1 and PKA mark. Residue Cys-663 is modified to S-nitrosocysteine. The GED domain occupies 663–754 (CEVIERLIKS…IIAEIRETHL (92 aa)). Positions 673-687 (YFLIVRKNIQDSVPK) are important for homodimerization.

This sequence belongs to the TRAFAC class dynamin-like GTPase superfamily. Dynamin/Fzo/YdjA family. In terms of assembly, homotetramer; dimerizes through the N-terminal GTP-middle region of one molecule binding to the GED domain of another DNM1L molecule. Oligomerizes in a GTP-dependent manner to form membrane-associated tubules with a spiral pattern. Interacts with GSK3B and MARCHF5. Interacts (via the GTPase and B domains) with UBE2I; the interaction promotes sumoylation of DNM1L, mainly in its B domain. Interacts with PPP3CA; the interaction dephosphorylates DNM1L and regulates its transition to mitochondria. Interacts with BCL2L1 isoform BCL-X(L) and CLTA; DNM1L and BCL2L1 isoform BCL-X(L) may form a complex in synaptic vesicles that also contains clathrin and MFF. Interacts with MFF; the interaction is inhinited by C11orf65/MFI. Interacts with FIS1. Interacts with MIEF2 and MIEF1; GTP-dependent this regulates GTP hydrolysis and DNM1L oligomerization. Interacts with PGAM5; this interaction leads to dephosphorylation at Ser-656 and activation of GTPase activity and eventually to mitochondria fragmentation. Interacts with RALBP1; during mitosis, recruits DNM1L to the mitochondrion and mediates its activation by the mitotic kinase cyclin B-CDK1. Interacts with FUNDC1; this interaction recruits DNM1L/DRP1 at ER-mitochondria contact sites. Phosphorylation/dephosphorylation events on two sites near the GED domain regulate mitochondrial fission. Phosphorylation on Ser-656 by CAMK1 and PKA inhibits the GTPase activity, leading to a defect in mitochondrial fission promoting mitochondrial elongation. Dephosphorylated on this site by PPP3CA which promotes mitochondrial fission. Phosphorylation on Ser-635 by PINK1 activates the GTPase activity and promotes mitochondrial fission. Phosphorylation on Ser-635 by CDK1 also promotes mitochondrial fission. Phosphorylated in a circadian manner at Ser-656. Dephosphorylated by PGAM5. In terms of processing, sumoylated on various lysine residues within the B domain, probably by MUL1. Sumoylation positively regulates mitochondrial fission. Desumoylated by SENP5 during G2/M transition of mitosis. Appears to be linked to its catalytic activity. Post-translationally, S-nitrosylation increases DNM1L dimerization, mitochondrial fission and causes neuronal damage. O-GlcNAcylation augments the level of the GTP-bound active form of DNM1L and induces translocation from the cytoplasm to mitochondria in cardiomyocytes. It also decreases phosphorylation at Ser-656. In terms of processing, ubiquitination by MARCHF5 affects mitochondrial morphology. Expressed in all tissues tested (at protein level). Longer isoforms are preferentially expressed in brain.

The protein resides in the cytoplasm. The protein localises to the cytosol. It is found in the golgi apparatus. It localises to the endomembrane system. Its subcellular location is the mitochondrion outer membrane. The protein resides in the peroxisome. The protein localises to the membrane. It is found in the clathrin-coated pit. It localises to the cytoplasmic vesicle. Its subcellular location is the secretory vesicle. The protein resides in the synaptic vesicle membrane. The enzyme catalyses GTP + H2O = GDP + phosphate + H(+). Functionally, functions in mitochondrial and peroxisomal division. Mediates membrane fission through oligomerization into membrane-associated tubular structures that wrap around the scission site to constrict and sever the mitochondrial membrane through a GTP hydrolysis-dependent mechanism. The specific recruitment at scission sites is mediated by membrane receptors like MFF, MIEF1 and MIEF2 for mitochondrial membranes. While the recruitment by the membrane receptors is GTP-dependent, the following hydrolysis of GTP induces the dissociation from the receptors and allows DNM1L filaments to curl into closed rings that are probably sufficient to sever a double membrane. Acts downstream of PINK1 to promote mitochondrial fission in a PRKN-dependent manner. Plays an important role in mitochondrial fission during mitosis. Through its function in mitochondrial division, ensures the survival of at least some types of postmitotic neurons, including Purkinje cells, by suppressing oxidative damage. Required for normal brain development, including that of cerebellum. Facilitates developmentally regulated apoptosis during neural tube formation. Required for a normal rate of cytochrome c release and caspase activation during apoptosis; this requirement may depend upon the cell type and the physiological apoptotic cues. Required for formation of endocytic vesicles. Proposed to regulate synaptic vesicle membrane dynamics through association with BCL2L1 isoform Bcl-X(L) which stimulates its GTPase activity in synaptic vesicles; the function may require its recruitment by MFF to clathrin-containing vesicles. Required for programmed necrosis execution. Rhythmic control of its activity following phosphorylation at Ser-656 is essential for the circadian control of mitochondrial ATP production. This chain is Dynamin-1-like protein, found in Rattus norvegicus (Rat).